Consider the following 744-residue polypeptide: Phosphoribosylformylglycinamidine synthase subunit PurL (744 aa).

His50 is an active-site residue. ATP is bound by residues Tyr53 and Lys92. Residue Glu94 participates in Mg(2+) binding. Residues 95-98 and Arg117 contribute to the substrate site; that span reads SHNH. His96 functions as the Proton acceptor in the catalytic mechanism. A Mg(2+)-binding site is contributed by Asp118. Gln241 is a binding site for substrate. Asp269 contacts Mg(2+). Position 313 to 315 (313 to 315) interacts with substrate; it reads ESQ. Residues Asp495 and Gly532 each coordinate ATP. Asn533 provides a ligand contact to Mg(2+). Substrate is bound at residue Ser535.

It belongs to the FGAMS family. As to quaternary structure, monomer. Part of the FGAM synthase complex composed of 1 PurL, 1 PurQ and 2 PurS subunits.

It is found in the cytoplasm. It catalyses the reaction N(2)-formyl-N(1)-(5-phospho-beta-D-ribosyl)glycinamide + L-glutamine + ATP + H2O = 2-formamido-N(1)-(5-O-phospho-beta-D-ribosyl)acetamidine + L-glutamate + ADP + phosphate + H(+). Its pathway is purine metabolism; IMP biosynthesis via de novo pathway; 5-amino-1-(5-phospho-D-ribosyl)imidazole from N(2)-formyl-N(1)-(5-phospho-D-ribosyl)glycinamide: step 1/2. Part of the phosphoribosylformylglycinamidine synthase complex involved in the purines biosynthetic pathway. Catalyzes the ATP-dependent conversion of formylglycinamide ribonucleotide (FGAR) and glutamine to yield formylglycinamidine ribonucleotide (FGAM) and glutamate. The FGAM synthase complex is composed of three subunits. PurQ produces an ammonia molecule by converting glutamine to glutamate. PurL transfers the ammonia molecule to FGAR to form FGAM in an ATP-dependent manner. PurS interacts with PurQ and PurL and is thought to assist in the transfer of the ammonia molecule from PurQ to PurL. In Rhizobium johnstonii (strain DSM 114642 / LMG 32736 / 3841) (Rhizobium leguminosarum bv. viciae), this protein is Phosphoribosylformylglycinamidine synthase subunit PurL.